A 238-amino-acid chain; its full sequence is UPF0758 protein Dtpsy_2777 (238 aa).

Positions 116-238 constitute an MPN domain; sequence VFDSPQAVQH…ALSMAEQGLV (123 aa). Positions 187, 189, and 200 each coordinate Zn(2+). The JAMM motif signature appears at 187–200; the sequence is HNHPSGSVQPSRAD.

Belongs to the UPF0758 family.

The protein is UPF0758 protein Dtpsy_2777 of Acidovorax ebreus (strain TPSY) (Diaphorobacter sp. (strain TPSY)).